Consider the following 235-residue polypeptide: Serine protease SplA (235 aa).

The first 35 residues, 1-35 (MNKNVMVKGLTALDILTSLGCAENISDQPHSIAKA), serve as a signal peptide directing secretion. Active-site charge relay system residues include histidine 74, aspartate 113, and serine 189.

This sequence belongs to the peptidase S1B family.

It localises to the secreted. In Staphylococcus aureus, this protein is Serine protease SplA (splA).